The primary structure comprises 149 residues: MHCPFCFAVDTKVIDSRLVGEGSSVRRRRQCLVCNERFTTFEVAELVMPRVVKSNDVREPFNEDKLRSGMLKALEKRPVSADDVEMAVNHIKTHLRGTGEREVASKMIGNLVMEQLKKLDKVAYIRFASVYRSFEDIKEFGEEIARLQD.

A zinc finger lies at 3–34 (CPFCFAVDTKVIDSRLVGEGSSVRRRRQCLVC). The ATP-cone domain maps to 49–139 (PRVVKSNDVR…VYRSFEDIKE (91 aa)).

The protein belongs to the NrdR family. Requires Zn(2+) as cofactor.

Negatively regulates transcription of bacterial ribonucleotide reductase nrd genes and operons by binding to NrdR-boxes. The chain is Transcriptional repressor NrdR from Klebsiella pneumoniae (strain 342).